A 129-amino-acid polypeptide reads, in one-letter code: Iron-sulfur cluster assembly 1 homolog, mitochondrial (129 aa).

The transit peptide at methionine 1–alanine 12 directs the protein to the mitochondrion. Cysteine 57, cysteine 121, and cysteine 123 together coordinate Fe cation.

Belongs to the HesB/IscA family.

It localises to the mitochondrion. Functionally, involved in the maturation of mitochondrial 4Fe-4S proteins functioning late in the iron-sulfur cluster assembly pathway. Probably involved in the binding of an intermediate of Fe/S cluster assembly. The sequence is that of Iron-sulfur cluster assembly 1 homolog, mitochondrial (isca1) from Danio rerio (Zebrafish).